The following is a 385-amino-acid chain: Ribosomal RNA large subunit methyltransferase G (385 aa).

It belongs to the methyltransferase superfamily. RlmG family.

Its subcellular location is the cytoplasm. The enzyme catalyses guanosine(1835) in 23S rRNA + S-adenosyl-L-methionine = N(2)-methylguanosine(1835) in 23S rRNA + S-adenosyl-L-homocysteine + H(+). Its function is as follows. Specifically methylates the guanine in position 1835 (m2G1835) of 23S rRNA. This is Ribosomal RNA large subunit methyltransferase G from Vibrio campbellii (strain ATCC BAA-1116).